The primary structure comprises 224 residues: Ribonuclease 3 (224 aa).

The region spanning 5 to 127 (ANRLQRRLGY…IIGAIYLDSD (123 aa)) is the RNase III domain. Position 40 (Glu-40) interacts with Mg(2+). The active site involves Asp-44. Residues Asp-113 and Glu-116 each coordinate Mg(2+). Glu-116 is an active-site residue. The DRBM domain occupies 154–224 (DPKTRLQECL…AELALKQLES (71 aa)).

The protein belongs to the ribonuclease III family. Homodimer. Mg(2+) serves as cofactor.

The protein resides in the cytoplasm. The catalysed reaction is Endonucleolytic cleavage to 5'-phosphomonoester.. In terms of biological role, digests double-stranded RNA. Involved in the processing of primary rRNA transcript to yield the immediate precursors to the large and small rRNAs (23S and 16S). Processes some mRNAs, and tRNAs when they are encoded in the rRNA operon. Processes pre-crRNA and tracrRNA of type II CRISPR loci if present in the organism. This is Ribonuclease 3 from Photobacterium profundum (strain SS9).